A 146-amino-acid polypeptide reads, in one-letter code: Hemoglobin subunit delta (146 aa).

Positions 2 to 146 (HLTGDEKSAV…VATALAHKYH (145 aa)) constitute a Globin domain. Serine 50 is subject to Phosphoserine. Residues histidine 63 and histidine 92 each coordinate heme b.

It belongs to the globin family. In terms of assembly, heterotetramer of two delta chains and two alpha chains. As to expression, red blood cells.

In Aotus trivirgatus (Three-striped night monkey), this protein is Hemoglobin subunit delta (HBD).